Consider the following 444-residue polypeptide: Signal recognition particle 54 kDa protein (444 aa).

GTP is bound by residues 106–113 (GLQGSGKT), 187–191 (DTAGR), and 245–248 (SKLD).

It belongs to the GTP-binding SRP family. SRP54 subfamily. As to quaternary structure, part of the signal recognition particle protein translocation system, which is composed of SRP and FtsY. Archaeal SRP consists of a 7S RNA molecule of 300 nucleotides and two protein subunits: SRP54 and SRP19.

It is found in the cytoplasm. It carries out the reaction GTP + H2O = GDP + phosphate + H(+). In terms of biological role, involved in targeting and insertion of nascent membrane proteins into the cytoplasmic membrane. Binds to the hydrophobic signal sequence of the ribosome-nascent chain (RNC) as it emerges from the ribosomes. The SRP-RNC complex is then targeted to the cytoplasmic membrane where it interacts with the SRP receptor FtsY. This Methanosphaera stadtmanae (strain ATCC 43021 / DSM 3091 / JCM 11832 / MCB-3) protein is Signal recognition particle 54 kDa protein.